The following is an 845-amino-acid chain: Receptor-like protein Cf-9 homolog (845 aa).

A signal peptide spans 1–19; sequence MGCVKLVFFMLLKLDLLEF. The interval 20 to 70 is N-cap; the sequence is KNMFTVNPNASDYCYDYTDQRMQSYPRTLFWNKSTDCCSWDGIHCDETTGQ. The Extracellular segment spans residues 20 to 794; it reads KNMFTVNPNA…EEDSPMISWQ (775 aa). Asparagine 28, asparagine 51, and asparagine 88 each carry an N-linked (GlcNAc...) asparagine glycan. Residues 71–94 form an LRR 1; degenerate repeat; sequence VVELDLRCSQLQGKFHSNSSLFQL. 25 LRR repeats span residues 95–118, 119–143, 144–171, 172–193, 194–217, 219–242, 244–266, 267–291, 292–316, 318–338, 340–364, 365–388, 390–410, 411–434, 436–458, 459–482, 484–506, 507–531, 532–554, 555–579, 581–605, 649–672, 673–696, 698–721, and 723–741; these read SNLK…KFGE, FSDL…ISHL, SKLH…LKNL, TQLR…SNFS, SHLT…VFHL, DLEF…KWNS, ASLM…SFSH, LTSL…LWNL, TNIE…RFEK, KRLS…SFNR, WTQL…VSGL, QNLG…IFSL, SLVV…EFKS, KTLS…LLNQ, SLQF…ICNL, KTLM…VGER, EYLL…TFSI, GNSF…LINC, KYLK…WLGY, LSQL…GSTN, FMRL…ILGN, LDSN…IIGD, LVGL…SFQN, SVLE…LASL, and FLEV…IPKG. Residues asparagine 131, asparagine 170, asparagine 183, and asparagine 191 are each glycosylated (N-linked (GlcNAc...) asparagine). Asparagine 241 is a glycosylation site (N-linked (GlcNAc...) asparagine). Residues asparagine 279 and asparagine 290 are each glycosylated (N-linked (GlcNAc...) asparagine). N-linked (GlcNAc...) asparagine glycans are attached at residues asparagine 337, asparagine 360, asparagine 378, and asparagine 398. N-linked (GlcNAc...) asparagine glycosylation occurs at asparagine 446. Asparagine 501 carries an N-linked (GlcNAc...) asparagine glycan. A glycan (N-linked (GlcNAc...) asparagine) is linked at asparagine 545. Residues asparagine 656, asparagine 680, and asparagine 696 are each glycosylated (N-linked (GlcNAc...) asparagine). 2 N-linked (GlcNAc...) asparagine glycosylation sites follow: asparagine 728 and asparagine 749. The segment at 742–794 is C-cap/acidic domain; it reads KQFDSFGNTSYQGNDGLRGFPLSKLCGVDDQVTTPAELDQEEEEEDSPMISWQ. A helical transmembrane segment spans residues 795–815; sequence GVLVGYGCGLVIGLSVIYIMW. The Cytoplasmic portion of the chain corresponds to 816 to 845; sequence STQYPAWFSRMDLKLEHIITTRMKKHKKRY.

This sequence belongs to the RLP family.

The protein localises to the cell membrane. Functionally, at the opposite of its homolog Cf-9 found in S.pimpinellifolium, was not able to confer resistance to the fungal pathogen C.fulvum. In Solanum lycopersicum (Tomato), this protein is Receptor-like protein Cf-9 homolog.